A 251-amino-acid polypeptide reads, in one-letter code: Hydroxyacylglutathione hydrolase (251 aa).

Zn(2+) contacts are provided by histidine 53, histidine 55, aspartate 57, histidine 58, histidine 110, aspartate 127, and histidine 165.

This sequence belongs to the metallo-beta-lactamase superfamily. Glyoxalase II family. As to quaternary structure, monomer. It depends on Zn(2+) as a cofactor.

It catalyses the reaction an S-(2-hydroxyacyl)glutathione + H2O = a 2-hydroxy carboxylate + glutathione + H(+). It functions in the pathway secondary metabolite metabolism; methylglyoxal degradation; (R)-lactate from methylglyoxal: step 2/2. Its function is as follows. Thiolesterase that catalyzes the hydrolysis of S-D-lactoyl-glutathione to form glutathione and D-lactic acid. This Escherichia coli O17:K52:H18 (strain UMN026 / ExPEC) protein is Hydroxyacylglutathione hydrolase.